The primary structure comprises 678 residues: Ribonuclease Z 2, mitochondrial (678 aa).

Residues 1 to 37 constitute a mitochondrion transit peptide; that stretch reads MKASLLVPRRALLFGQLLPPKYSWYSVKRWQSQLTFR.

This sequence belongs to the RNase Z family. Zn(2+) serves as cofactor.

The protein resides in the mitochondrion. It localises to the cytoplasm. The catalysed reaction is Endonucleolytic cleavage of RNA, removing extra 3' nucleotides from tRNA precursor, generating 3' termini of tRNAs. A 3'-hydroxy group is left at the tRNA terminus and a 5'-phosphoryl group is left at the trailer molecule.. Zinc phosphodiesterase, which displays some tRNA 3'-processing endonuclease activity. May be involved in tRNA maturation, by removing a 3'-trailer from precursor tRNA. This chain is Ribonuclease Z 2, mitochondrial (trz2), found in Schizosaccharomyces pombe (strain 972 / ATCC 24843) (Fission yeast).